Here is a 99-residue protein sequence, read N- to C-terminus: Putative membrane protein insertion efficiency factor (99 aa).

The protein belongs to the UPF0161 family.

The protein localises to the cell membrane. Its function is as follows. Could be involved in insertion of integral membrane proteins into the membrane. The chain is Putative membrane protein insertion efficiency factor from Corynebacterium glutamicum (strain ATCC 13032 / DSM 20300 / JCM 1318 / BCRC 11384 / CCUG 27702 / LMG 3730 / NBRC 12168 / NCIMB 10025 / NRRL B-2784 / 534).